Here is a 291-residue protein sequence, read N- to C-terminus: Shikimate dehydrogenase (NADP(+)) (291 aa).

Shikimate is bound by residues 18-20 (SLS) and Thr70. Lys74 acts as the Proton acceptor in catalysis. Shikimate-binding residues include Asn95 and Asp110. Residues 134 to 138 (GAGGA) and Val228 contribute to the NADP(+) site. Tyr230 lines the shikimate pocket. Gly251 contributes to the NADP(+) binding site.

Belongs to the shikimate dehydrogenase family. Homodimer.

It catalyses the reaction shikimate + NADP(+) = 3-dehydroshikimate + NADPH + H(+). It functions in the pathway metabolic intermediate biosynthesis; chorismate biosynthesis; chorismate from D-erythrose 4-phosphate and phosphoenolpyruvate: step 4/7. Involved in the biosynthesis of the chorismate, which leads to the biosynthesis of aromatic amino acids. Catalyzes the reversible NADPH linked reduction of 3-dehydroshikimate (DHSA) to yield shikimate (SA). The polypeptide is Shikimate dehydrogenase (NADP(+)) (Streptomyces avermitilis (strain ATCC 31267 / DSM 46492 / JCM 5070 / NBRC 14893 / NCIMB 12804 / NRRL 8165 / MA-4680)).